Consider the following 188-residue polypeptide: Peptidyl-tRNA hydrolase (188 aa).

Tyrosine 14 lines the tRNA pocket. Histidine 19 acts as the Proton acceptor in catalysis. Positions 64, 66, and 112 each coordinate tRNA.

It belongs to the PTH family. Monomer.

It localises to the cytoplasm. It carries out the reaction an N-acyl-L-alpha-aminoacyl-tRNA + H2O = an N-acyl-L-amino acid + a tRNA + H(+). In terms of biological role, hydrolyzes ribosome-free peptidyl-tRNAs (with 1 or more amino acids incorporated), which drop off the ribosome during protein synthesis, or as a result of ribosome stalling. Catalyzes the release of premature peptidyl moieties from peptidyl-tRNA molecules trapped in stalled 50S ribosomal subunits, and thus maintains levels of free tRNAs and 50S ribosomes. In Clostridium perfringens (strain SM101 / Type A), this protein is Peptidyl-tRNA hydrolase.